Consider the following 436-residue polypeptide: Elongation factor 1-gamma-A (436 aa).

Residues Ala2–Thr87 enclose the GST N-terminal domain. One can recognise a GST C-terminal domain in the interval Thr88–Phe221. 2 stretches are compositionally biased toward basic and acidic residues: residues Phe221–Lys249 and Ser265–Pro278. Residues Phe221 to Pro278 form a disordered region. One can recognise an EF-1-gamma C-terminal domain in the interval Ser275–Lys436.

In terms of assembly, EF-1 is composed of four subunits: alpha, beta, delta, and gamma. Phosphorylated by CDK1. In terms of processing, the N-terminus is blocked.

Probably plays a role in anchoring the complex to other cellular components. This is Elongation factor 1-gamma-A (eef1g-a) from Xenopus laevis (African clawed frog).